Reading from the N-terminus, the 784-residue chain is MRRSLAPSQRLGVRLQPNQEFTPPLLQKKNKRTCQQEQEQLQCQFALRDATNSNGSIPLPIRFTANSEYELAIAKVLARKFKVPIANYVPDYGGNRCLGVRRSIVRRALHDPQACNALVLYTPPVYSEHERMKMDPTKILVHVVVDPLLSNILRPHQREGVRFMYDCVEGKKGNFNGCIMADEMGLGKTLQCVTLVWTLLRQSCECKPTITKAIIVSPSSLVKNWEKEFTKWLHGRMHCLAMEGGSKEDTIKALEQFSMNTSTRLGTPVLLISYETFRIYANILCQNEVGMVICDEGHRLKNSDNLTYQALMGLKTKRRVLLSGTPIQNDLTEYFSLVNFVNPEMLGTAADFKRNFENPILKGQNTDSSDKERERALEKTQELIGLVNQCIIRRTNQILTKYLPVKFEMVICVRLTSVQLEFYTNFLKSDKVRRSLADCNEKASLTALADITTLKKLCSHPDLIYEKMLARDKGFENSQNILPTNYKPKDLNPELSGKFMLLDFMLATIRANSDDKVVLISNYTQTLDLFEQLARKRKYTFVRLDGTMTIKKRSKVVDRFNDPENDCFLFMLSSKAGGCGLNLIGANRLFMFDPDWNPANDEQAMARVWRDGQKKPCYIYRLVASGSIEEKILQRQTHKKSLSSTIIDNNESAEKHFTRDDLKDLFSFDSKILSDTHEKLKCKRCLQNVQTKPPPEDTDCTSHLSQWFHCSNNRGLPDDILAQAWTASKCVSFVFHHRSQAQAIKESEETKQEAEDTSIPAKSKRKRSTTPESDDCNDEDFKGF.

Residues 2 to 9 (RRSLAPSQ) are required for chromatin remodeling, strand pairing activities and coupling of ATPase activity. Residue T22 is modified to Phosphothreonine. Residues 169–344 (EGKKGNFNGC…FSLVNFVNPE (176 aa)) enclose the Helicase ATP-binding domain. 182 to 189 (DEMGLGKT) contacts ATP. Positions 295–298 (DEGH) match the DEGH box motif. The region spanning 501–658 (LLDFMLATIR…NNESAEKHFT (158 aa)) is the Helicase C-terminal domain. Residues 742–784 (QAIKESEETKQEAEDTSIPAKSKRKRSTTPESDDCNDEDFKGF) form a disordered region. A compositionally biased stretch (basic and acidic residues) spans 745-754 (KESEETKQEA).

It belongs to the SNF2/RAD54 helicase family. Interacts (via N-terminus) with spn-A/Rad51.

Its subcellular location is the nucleus. Functionally, involved in mitotic DNA repair and meiotic recombination. Functions in the recombinational DNA repair pathway. Essential for interhomolog gene conversion (GC), but may have a less important role in intersister GC than spn-A/Rad51. In the presence of DNA, spn-A/Rad51 enhances the ATPase activity of okr/Rad54. The sequence is that of DNA repair and recombination protein RAD54-like from Drosophila willistoni (Fruit fly).